The chain runs to 178 residues: Large ribosomal subunit protein uL16 (178 aa).

This sequence belongs to the universal ribosomal protein uL16 family.

This chain is Large ribosomal subunit protein uL16, found in Pyrobaculum calidifontis (strain DSM 21063 / JCM 11548 / VA1).